We begin with the raw amino-acid sequence, 282 residues long: tRNA pseudouridine synthase B (282 aa).

Aspartate 36 functions as the Nucleophile in the catalytic mechanism.

This sequence belongs to the pseudouridine synthase TruB family. Type 1 subfamily.

The catalysed reaction is uridine(55) in tRNA = pseudouridine(55) in tRNA. Responsible for synthesis of pseudouridine from uracil-55 in the psi GC loop of transfer RNAs. This is tRNA pseudouridine synthase B from Mycoplasmopsis pulmonis (strain UAB CTIP) (Mycoplasma pulmonis).